Consider the following 356-residue polypeptide: Protein RecA (356 aa).

79-86 (GPESSGKT) is a binding site for ATP.

The protein belongs to the RecA family.

The protein localises to the cytoplasm. Its function is as follows. Can catalyze the hydrolysis of ATP in the presence of single-stranded DNA, the ATP-dependent uptake of single-stranded DNA by duplex DNA, and the ATP-dependent hybridization of homologous single-stranded DNAs. It interacts with LexA causing its activation and leading to its autocatalytic cleavage. This is Protein RecA from Borrelia hermsii (strain HS1 / DAH).